The sequence spans 205 residues: Heat shock protein beta-1 (205 aa).

R12 bears the Omega-N-methylarginine mark. At S15 the chain carries Phosphoserine; by MAPKAPK2 and MAPKAPK3. 2 positions are modified to phosphoserine: S26 and S65. Residues 70-205 (APAYSRALSR…AAKSDETAAK (136 aa)) form an interaction with TGFB1I1 region. The 109-residue stretch at 76-184 (ALSRQLSSGV…QSNEITIPVT (109 aa)) folds into the sHSP domain. Residues S78 and S82 each carry the phosphoserine; by MAPKAPK2, MAPKAPK3 and MAPKAPK5 modification. Residues S83, S86, and S98 each carry the phosphoserine modification. N6-acetyllysine is present on K123. T174 carries the post-translational modification Phosphothreonine. S176 and S199 each carry phosphoserine.

This sequence belongs to the small heat shock protein (HSP20) family. In terms of assembly, homooligomer. Homodimer; becomes monomeric upon activation. Heterooligomer; with HSPB6. Associates with alpha- and beta-tubulin. Interacts with TGFB1I1. Interacts with CRYAB. Interacts with HSPB8. Interacts with HSPBAP1. In terms of processing, phosphorylated upon exposure to protein kinase C activators and heat shock. Phosphorylation by MAPKAPK2 and MAPKAPK3 in response to stress dissociates HSPB1 from large small heat-shock protein (sHsps) oligomers and impairs its chaperone activity and ability to protect against oxidative stress effectively. Phosphorylation by MAPKAPK5 in response to PKA stimulation induces F-actin rearrangement. As to expression, detected in all tissues tested: skeletal muscle, heart, aorta, large intestine, small intestine, stomach, esophagus, bladder, adrenal gland, thyroid, pancreas, testis, adipose tissue, kidney, liver, spleen, cerebral cortex, blood serum and cerebrospinal fluid. Highest levels are found in the heart and in tissues composed of striated and smooth muscle.

It localises to the cytoplasm. The protein resides in the nucleus. The protein localises to the cytoskeleton. Its subcellular location is the spindle. Small heat shock protein which functions as a molecular chaperone probably maintaining denatured proteins in a folding-competent state. Plays a role in stress resistance and actin organization. Through its molecular chaperone activity may regulate numerous biological processes including the phosphorylation and the axonal transport of neurofilament proteins. The sequence is that of Heat shock protein beta-1 (HSPB1) from Homo sapiens (Human).